A 719-amino-acid polypeptide reads, in one-letter code: Catalase-3 (719 aa).

The N-terminal stretch at M1–A18 is a signal peptide. The propeptide occupies A19–R30. Active-site residues include H102 and N175. Y389 contacts heme.

The protein belongs to the catalase family. The cofactor is heme.

It catalyses the reaction 2 H2O2 = O2 + 2 H2O. In terms of biological role, occurs in almost all aerobically respiring organisms and serves to protect cells from the toxic effects of hydrogen peroxide. The sequence is that of Catalase-3 (cat-3) from Neurospora crassa (strain ATCC 24698 / 74-OR23-1A / CBS 708.71 / DSM 1257 / FGSC 987).